The chain runs to 687 residues: Glycine--tRNA ligase beta subunit (687 aa).

This sequence belongs to the class-II aminoacyl-tRNA synthetase family. As to quaternary structure, tetramer of two alpha and two beta subunits.

Its subcellular location is the cytoplasm. It carries out the reaction tRNA(Gly) + glycine + ATP = glycyl-tRNA(Gly) + AMP + diphosphate. The protein is Glycine--tRNA ligase beta subunit of Geobacter sulfurreducens (strain ATCC 51573 / DSM 12127 / PCA).